Consider the following 211-residue polypeptide: MNQTGSTVAINLAKKLYDAGIRDNLVLQAIANTPREMFLDAALAHKAYENTALPIGQGQTISQPYIVARMTELVMQNRPQRVLEVGTGSGYQAAILAKLVPELCTIERIKALQIQARQRLKRLDLHNVSFKYGDGWLGWPNRGPFDAIMVTAAAASLPTALLEQLSEGGRLIIPVGEDAQQLLAITRKGQEYSSEVIESVKFVPLVNGNLA.

The active site involves Ser62.

Belongs to the methyltransferase superfamily. L-isoaspartyl/D-aspartyl protein methyltransferase family.

It is found in the cytoplasm. It catalyses the reaction [protein]-L-isoaspartate + S-adenosyl-L-methionine = [protein]-L-isoaspartate alpha-methyl ester + S-adenosyl-L-homocysteine. In terms of biological role, catalyzes the methyl esterification of L-isoaspartyl residues in peptides and proteins that result from spontaneous decomposition of normal L-aspartyl and L-asparaginyl residues. It plays a role in the repair and/or degradation of damaged proteins. The sequence is that of Protein-L-isoaspartate O-methyltransferase from Shewanella amazonensis (strain ATCC BAA-1098 / SB2B).